Consider the following 350-residue polypeptide: Atypical chemokine receptor 4 (350 aa).

Over 1-41 (MAVEYNQSTDYYYEENEMNDTHDYSQYEVICIKEEVRKFAK) the chain is Extracellular. N6 and N19 each carry an N-linked (GlcNAc...) asparagine glycan. A helical membrane pass occupies residues 42–66 (VFLPAFFTIAFIIGLAGNSTVVAIY). Residues 67-79 (AYYKKRRTKTDVY) lie on the Cytoplasmic side of the membrane. The helical transmembrane segment at 80–99 (ILNLAVADLFLLFTLPFWAV) threads the bilayer. Over 100-113 (NAVHGWVLGKIMCK) the chain is Extracellular. C112 and C184 are joined by a disulfide. Residues 114–135 (VTSALYTVNFVSGMQFLACIST) form a helical membrane-spanning segment. Over 136 to 153 (DRYWAVTKAPSQSGVGKP) the chain is Cytoplasmic. A helical transmembrane segment spans residues 154 to 175 (CWVICFCVWVAAILLSIPQLVF). Residues 176–199 (YTVNHKARCVPIFPYHLGTSMKAS) are Extracellular-facing. The helical transmembrane segment at 200–222 (IQILEICIGFIIPFLIMAVCYFI) threads the bilayer. Over 223 to 241 (TAKTLIKMPNIKKSQPLKV) the chain is Cytoplasmic. A helical membrane pass occupies residues 242–265 (LFTVVIVFIVTQLPYNIVKFCQAI). At 266 to 283 (DIIYSLITDCDMSKRMDV) the chain is on the extracellular side. Residues 284-306 (AIQITESIALFHSCLNPVLYVFM) traverse the membrane as a helical segment. The Cytoplasmic segment spans residues 307–350 (GTSFKNYIMKVAKKYGSWRRQRQNVEEIPFESEDATEPTSTFSI).

Belongs to the G-protein coupled receptor 1 family. Atypical chemokine receptor subfamily. In terms of assembly, forms heteromers with CXCR3. Interacts with ARRB1 and ARRB2. Post-translationally, the Ser/Thr residues in the C-terminal cytoplasmic tail may be phosphorylated. Expressed in circumvallate and fungiform papillae, olfactory epithelium and lung. Lower expression in liver, kidney and tongue epithelium bearing no taste papillae. Very low expression in the cerebral cortex of the brain.

It is found in the early endosome. The protein localises to the recycling endosome. It localises to the cell membrane. Atypical chemokine receptor that controls chemokine levels and localization via high-affinity chemokine binding that is uncoupled from classic ligand-driven signal transduction cascades, resulting instead in chemokine sequestration, degradation, or transcytosis. Also known as interceptor (internalizing receptor) or chemokine-scavenging receptor or chemokine decoy receptor. Acts as a receptor for chemokines CCL2, CCL8, CCL13, CCL19, CCL21 and CCL25. Chemokine-binding does not activate G-protein-mediated signal transduction but instead induces beta-arrestin recruitment, leading to ligand internalization. Plays an important role in controlling the migration of immune and cancer cells that express chemokine receptors CCR7 and CCR9, by reducing the availability of CCL19, CCL21, and CCL25 through internalization. Negatively regulates CXCR3-induced chemotaxis. Regulates T-cell development in the thymus. This Bos taurus (Bovine) protein is Atypical chemokine receptor 4 (ACKR4).